The sequence spans 390 residues: Magnesium-protoporphyrin IX monomethyl ester [oxidative] cyclase (390 aa).

Residues 1-20 (MSQSTIESTNKKEINKGKAP) form a disordered region.

It belongs to the AcsF family. Requires Fe cation as cofactor.

The enzyme catalyses Mg-protoporphyrin IX 13-monomethyl ester + 3 NADPH + 3 O2 + 2 H(+) = 3,8-divinyl protochlorophyllide a + 3 NADP(+) + 5 H2O. It participates in porphyrin-containing compound metabolism; chlorophyll biosynthesis (light-independent). In terms of biological role, catalyzes the formation of the isocyclic ring in chlorophyll biosynthesis. Mediates the cyclase reaction, which results in the formation of divinylprotochlorophyllide (Pchlide) characteristic of all chlorophylls from magnesium-protoporphyrin IX 13-monomethyl ester (MgPMME). The protein is Magnesium-protoporphyrin IX monomethyl ester [oxidative] cyclase of Prochlorococcus marinus (strain MIT 9301).